A 413-amino-acid polypeptide reads, in one-letter code: Tryptophan synthase beta chain (413 aa).

At Lys106 the chain carries N6-(pyridoxal phosphate)lysine.

The protein belongs to the TrpB family. Tetramer of two alpha and two beta chains. Pyridoxal 5'-phosphate is required as a cofactor.

The enzyme catalyses (1S,2R)-1-C-(indol-3-yl)glycerol 3-phosphate + L-serine = D-glyceraldehyde 3-phosphate + L-tryptophan + H2O. Its pathway is amino-acid biosynthesis; L-tryptophan biosynthesis; L-tryptophan from chorismate: step 5/5. Its function is as follows. The beta subunit is responsible for the synthesis of L-tryptophan from indole and L-serine. The chain is Tryptophan synthase beta chain from Methylorubrum populi (strain ATCC BAA-705 / NCIMB 13946 / BJ001) (Methylobacterium populi).